The sequence spans 239 residues: Small ribosomal subunit protein uS3 (239 aa).

Residues 39-107 form the KH type-2 domain; sequence IRAALMKTLK…EVLINIVEVR (69 aa). A disordered region spans residues 214–239; the sequence is AQDKKMAEQDHGGGGGDRRRRDRDAA.

The protein belongs to the universal ribosomal protein uS3 family. As to quaternary structure, part of the 30S ribosomal subunit. Forms a tight complex with proteins S10 and S14.

Functionally, binds the lower part of the 30S subunit head. Binds mRNA in the 70S ribosome, positioning it for translation. The chain is Small ribosomal subunit protein uS3 from Methylocella silvestris (strain DSM 15510 / CIP 108128 / LMG 27833 / NCIMB 13906 / BL2).